Reading from the N-terminus, the 279-residue chain is NAD kinase (279 aa).

Asp57 serves as the catalytic Proton acceptor. NAD(+) is bound by residues 57–58, 133–134, Arg159, Asp161, and 172–177; these read DG, NE, and TAYNKS.

Belongs to the NAD kinase family. A divalent metal cation is required as a cofactor.

It localises to the cytoplasm. The catalysed reaction is NAD(+) + ATP = ADP + NADP(+) + H(+). Functionally, involved in the regulation of the intracellular balance of NAD and NADP, and is a key enzyme in the biosynthesis of NADP. Catalyzes specifically the phosphorylation on 2'-hydroxyl of the adenosine moiety of NAD to yield NADP. The polypeptide is NAD kinase (Streptococcus pyogenes serotype M2 (strain MGAS10270)).